The primary structure comprises 467 residues: Chromosomal replication initiator protein DnaA (467 aa).

A domain I, interacts with DnaA modulators region spans residues 1 to 87 (MSSSLWLQCL…VGSRPVVAPK (87 aa)). A domain II region spans residues 87–130 (KPAPVRTAADVAAESSAPAQLAQRKPIHKTWDDDSAAADITHRS). Residues 131–347 (NVNPKHKFNN…GALNRVIANA (217 aa)) are domain III, AAA+ region. 4 residues coordinate ATP: glycine 175, glycine 177, lysine 178, and threonine 179. The domain IV, binds dsDNA stretch occupies residues 348 to 467 (NFTGRPITID…YSNLIRTLSS (120 aa)).

The protein belongs to the DnaA family. As to quaternary structure, oligomerizes as a right-handed, spiral filament on DNA at oriC.

The protein localises to the cytoplasm. Functionally, plays an essential role in the initiation and regulation of chromosomal replication. ATP-DnaA binds to the origin of replication (oriC) to initiate formation of the DNA replication initiation complex once per cell cycle. Binds the DnaA box (a 9 base pair repeat at the origin) and separates the double-stranded (ds)DNA. Forms a right-handed helical filament on oriC DNA; dsDNA binds to the exterior of the filament while single-stranded (ss)DNA is stabiized in the filament's interior. The ATP-DnaA-oriC complex binds and stabilizes one strand of the AT-rich DNA unwinding element (DUE), permitting loading of DNA polymerase. After initiation quickly degrades to an ADP-DnaA complex that is not apt for DNA replication. Binds acidic phospholipids. The sequence is that of Chromosomal replication initiator protein DnaA from Vibrio cholerae serotype O1 (strain ATCC 39315 / El Tor Inaba N16961).